A 323-amino-acid polypeptide reads, in one-letter code: tRNA U34 carboxymethyltransferase (323 aa).

Carboxy-S-adenosyl-L-methionine contacts are provided by residues K91, W105, K110, G130, 152–154 (DPT), 181–182 (IE), M196, Y200, and R315.

Belongs to the class I-like SAM-binding methyltransferase superfamily. CmoB family. In terms of assembly, homotetramer.

It catalyses the reaction carboxy-S-adenosyl-L-methionine + 5-hydroxyuridine(34) in tRNA = 5-carboxymethoxyuridine(34) in tRNA + S-adenosyl-L-homocysteine + H(+). Functionally, catalyzes carboxymethyl transfer from carboxy-S-adenosyl-L-methionine (Cx-SAM) to 5-hydroxyuridine (ho5U) to form 5-carboxymethoxyuridine (cmo5U) at position 34 in tRNAs. The protein is tRNA U34 carboxymethyltransferase of Salmonella arizonae (strain ATCC BAA-731 / CDC346-86 / RSK2980).